Here is a 593-residue protein sequence, read N- to C-terminus: Brain-enriched guanylate kinase-associated protein (593 aa).

An N-acetylmethionine modification is found at Met-1. At Tyr-137 the chain carries Phosphotyrosine. 6 positions are modified to phosphoserine: Ser-200, Ser-229, Ser-246, Ser-265, Ser-346, and Ser-373. Arg-381 is subject to Asymmetric dimethylarginine. A phosphoserine mark is found at Ser-455, Ser-465, Ser-475, Ser-477, Ser-500, Ser-502, Ser-506, Ser-553, and Ser-563. The disordered stretch occupies residues 499–593 (LSLSPGRSAD…KAQLYGTLLN (95 aa)).

Interacts with DLG4 and DLGAP1 and forms a ternary complex.

The protein localises to the cytoplasm. The protein resides in the membrane. May sustain the structure of the postsynaptic density (PSD). The chain is Brain-enriched guanylate kinase-associated protein (BEGAIN) from Homo sapiens (Human).